Reading from the N-terminus, the 541-residue chain is Phosphoenolpyruvate carboxykinase (ATP) (541 aa).

Residue 243–250 (GLSGTGKT) coordinates ATP.

It belongs to the phosphoenolpyruvate carboxykinase (ATP) family.

It carries out the reaction oxaloacetate + ATP = phosphoenolpyruvate + ADP + CO2. The protein operates within carbohydrate biosynthesis; gluconeogenesis. The polypeptide is Phosphoenolpyruvate carboxykinase (ATP) (PCK1) (Eremothecium gossypii (strain ATCC 10895 / CBS 109.51 / FGSC 9923 / NRRL Y-1056) (Yeast)).